The following is a 472-amino-acid chain: Ulvan lyase (472 aa).

Residues 1 to 21 form the signal peptide; sequence MIIKQYLLKISLCVLLLGCDS. Substrate is bound by residues Asn46 and Asn109. Residue His110 is the Proton donor of the active site. Substrate is bound by residues Lys112 and His130. Tyr175 (proton acceptor) is an active-site residue. Residues Arg191, His195, and Tyr233 each contribute to the substrate site. His195 lines the Zn(2+) pocket. Residues His251, Cys253, and His265 each contribute to the Zn(2+) site. Substrate is bound at residue His265.

The protein belongs to the polysaccharide lyase 25 family.

Ulvan lyase involved in ulvan degradation. Ulvan is the main polysaccharide component of the Ulvales (green seaweed) cell wall. It is composed of disaccharide building blocks comprising 3-sulfated rhamnose (Rha3S) linked to D-glucuronic acid (GlcA), L-iduronic acid (IduA), or D-xylose (Xyl). Ulvan lyase catalyzes the endolytic cleavage of the glycosidic bond between Rha3S and the uronic acids GlcA or IduA, producing oligosaccharides that have unsaturated 4-deoxy-L-threo-hex-4-enopyranosiduronic acid (deltaUA) at the non-reducing end. This results eventually in the degradation of the ulvan polysaccharide into deltaUA-Rha3S disaccharides and deltaUA-Rha3S-Xyl-Rha3S tetrasaccharides. The polypeptide is Ulvan lyase (Nonlabens ulvanivorans (Persicivirga ulvanivorans)).